A 100-amino-acid chain; its full sequence is Urease subunit gamma (100 aa).

The protein belongs to the urease gamma subunit family. Heterotrimer of UreA (gamma), UreB (beta) and UreC (alpha) subunits. Three heterotrimers associate to form the active enzyme.

The protein localises to the cytoplasm. It catalyses the reaction urea + 2 H2O + H(+) = hydrogencarbonate + 2 NH4(+). It functions in the pathway nitrogen metabolism; urea degradation; CO(2) and NH(3) from urea (urease route): step 1/1. This chain is Urease subunit gamma, found in Acinetobacter baylyi (strain ATCC 33305 / BD413 / ADP1).